Here is an 833-residue protein sequence, read N- to C-terminus: Leucine--tRNA ligase (833 aa).

The short motif at 41 to 52 is the 'HIGH' region element; it reads PYPSGAGLHVGH. A 'KMSKS' region motif is present at residues 610-614; the sequence is KMSKS. Lysine 613 contacts ATP.

Belongs to the class-I aminoacyl-tRNA synthetase family.

It localises to the cytoplasm. The enzyme catalyses tRNA(Leu) + L-leucine + ATP = L-leucyl-tRNA(Leu) + AMP + diphosphate. This is Leucine--tRNA ligase from Streptococcus pneumoniae (strain CGSP14).